We begin with the raw amino-acid sequence, 172 residues long: Translocon-associated protein subunit delta (172 aa).

The signal sequence occupies residues 1 to 23; it reads MAAMASFGALALLLLSGLSCCSE. At 24–143 the chain is on the lumenal side; it reads ACLEPQITPS…SVDHRGTWNG (120 aa). A disulfide bond links cysteine 25 and cysteine 56. Lysine 72 is covalently cross-linked (Glycyl lysine isopeptide (Lys-Gly) (interchain with G-Cter in ubiquitin)). The helical transmembrane segment at 144-164 threads the bilayer; that stretch reads PWVSTEVLAAVIGIVIYYLAF. The Cytoplasmic segment spans residues 165–172; sequence SAKSHIQA.

The protein belongs to the TRAP-delta family. Heterotetramer of TRAP-alpha, TRAP-beta, TRAP-delta and TRAP-gamma.

The protein localises to the endoplasmic reticulum membrane. Functionally, TRAP proteins are part of a complex whose function is to bind calcium to the ER membrane and thereby regulate the retention of ER resident proteins. The polypeptide is Translocon-associated protein subunit delta (Ssr4) (Mus musculus (Mouse)).